We begin with the raw amino-acid sequence, 335 residues long: Epidermal differentiation-specific protein (335 aa).

Beta/gamma crystallin 'Greek key' domains lie at 2–42 (NTIT…KIVG), 43–81 (QPWI…RLIT), 87–126 (PQIT…RVQR), and 127–169 (GAWA…YPLR).

This sequence belongs to the beta/gamma-crystallin family. As to expression, epidermis specific.

This is Epidermal differentiation-specific protein from Cynops pyrrhogaster (Japanese fire-bellied newt).